The chain runs to 283 residues: DNA repair protein RecO (283 aa).

Belongs to the RecO family.

Involved in DNA repair and RecF pathway recombination. The sequence is that of DNA repair protein RecO from Gloeothece citriformis (strain PCC 7424) (Cyanothece sp. (strain PCC 7424)).